A 105-amino-acid chain; its full sequence is UPF0145 protein HD_1349 (105 aa).

The protein belongs to the UPF0145 family.

This is UPF0145 protein HD_1349 from Haemophilus ducreyi (strain 35000HP / ATCC 700724).